The primary structure comprises 228 residues: Probable methylthioribulose-1-phosphate dehydratase (228 aa).

Position 87 (Cys-87) interacts with substrate. Zn(2+) contacts are provided by His-105 and His-107. Catalysis depends on Glu-129, which acts as the Proton donor/acceptor. His-185 is a binding site for Zn(2+).

Belongs to the aldolase class II family. MtnB subfamily. The cofactor is Zn(2+).

The protein localises to the cytoplasm. It carries out the reaction 5-(methylsulfanyl)-D-ribulose 1-phosphate = 5-methylsulfanyl-2,3-dioxopentyl phosphate + H2O. The protein operates within amino-acid biosynthesis; L-methionine biosynthesis via salvage pathway; L-methionine from S-methyl-5-thio-alpha-D-ribose 1-phosphate: step 2/6. Its function is as follows. Catalyzes the dehydration of methylthioribulose-1-phosphate (MTRu-1-P) into 2,3-diketo-5-methylthiopentyl-1-phosphate (DK-MTP-1-P). In Drosophila willistoni (Fruit fly), this protein is Probable methylthioribulose-1-phosphate dehydratase.